We begin with the raw amino-acid sequence, 291 residues long: MAVTCDPEAFLSICFVTLVFLQLPLASIWKADFDVTGPHAPILAMAGGHVELQCQLFPNISAEDMELRWYRCQPSLAVHMHERGMDMDGEQKWQYRGRTTFMSDHVARGKAMVRSHRVTTFDNRTYCCRFKDGVKFGEATVQVQVAGLGREPRIQVTDQQDGVRAECTSAGCFPKSWVERRDFRGQARPAVTNLSASATTRLWAVASSLTLWDRAVEGLSCSISSPLLPERRKVAESHLPATFSRSSQFTAWKAALPLILVAMGLVIAGGICIFWKRQREKNKASLEEERE.

An N-terminal signal peptide occupies residues 1-26 (MAVTCDPEAFLSICFVTLVFLQLPLA). Residues 27–146 (SIWKADFDVT…GEATVQVQVA (120 aa)) form the Ig-like V-type domain. The Extracellular portion of the chain corresponds to 27–254 (SIWKADFDVT…RSSQFTAWKA (228 aa)). An intrachain disulfide couples Cys54 to Cys128. Asn59 carries an N-linked (GlcNAc...) asparagine glycan. The chain crosses the membrane as a helical span at residues 255-275 (ALPLILVAMGLVIAGGICIFW). Residues 276 to 291 (KRQREKNKASLEEERE) lie on the Cytoplasmic side of the membrane.

The protein belongs to the immunoglobulin superfamily. BTN/MOG family.

It is found in the membrane. The chain is Putative butyrophilin-like protein 10 pseudogene from Homo sapiens (Human).